The primary structure comprises 194 residues: 3-isopropylmalate dehydratase small subunit (194 aa).

This sequence belongs to the LeuD family. LeuD type 1 subfamily. As to quaternary structure, heterodimer of LeuC and LeuD.

The catalysed reaction is (2R,3S)-3-isopropylmalate = (2S)-2-isopropylmalate. The protein operates within amino-acid biosynthesis; L-leucine biosynthesis; L-leucine from 3-methyl-2-oxobutanoate: step 2/4. Functionally, catalyzes the isomerization between 2-isopropylmalate and 3-isopropylmalate, via the formation of 2-isopropylmaleate. The chain is 3-isopropylmalate dehydratase small subunit from Anoxybacillus flavithermus (strain DSM 21510 / WK1).